Consider the following 862-residue polypeptide: MAQYTPMIQQYLAIKKDYPDTFLFFRLGDFYELFFDDAILASRELEITLTGRDGGGSERIPMCGVPHHAADGYIAELLKKGHKVAVCEQVEDPKEAKGVVRREVTRVITPGTMMEGKWLTDKENNYMAALAQVEGRTGVAACDMSTGEMYVTSLAGQAESVLDEALQYRPKELVFFGLAALPKTALPSTVVDAHQLDVFAVDSQYAEQAKGLDVSMRAAVNALLFYIGTTQKRSLAHMRLLKQYDAKQYLQMDGFSRRNLELTETIRDKTKKGSLLWLLDRTQTAMGGRLLRRWIERPLLSRDQLEARLSAVEALKGDMLLRSDLRTCLDRVYDLERLAGRISYGNANARDLIQLRMSLEAVPELKQYMIQTNTPVLMELANGMDECADIVNYLAHALVDDPPISVREGGMIRTGYDEYLDKLHTASREGKTWIAQLEQGEREATGIRSLKVGFNKVFGYYIEISKSNIANVPAGRYERKQTLANAERYITPELKEREALILEAEEKMIELEYQLFVAVRSEVAKHIPRLQNLAERIASVDVLQAFATVSDERGFVRPELVESGDYVITEGRHPVVEAVLEREKYVANDVEMDQTNRQVLLITGPNMAGKSTYMRQIALITVMAQIGCFVPAKQAKLSIVDQIFTRIGAADDLVGGHSTFMVEMLETRHALQKATAKSLILLDEIGRGTSTYDGMALAQAVIEYICQKIGAKTLFSTHYHELTGLAETLSGVVNVNARCEEREGKLLFLHKIEEGRADKSYGIHVAELAEMPTWVIERARSILTGLEANGSTGNGNAASDVQMSLETLWTAPVAAVREEPMQFASAEEEAIMAELRELDLNSTTPMDAMMKLYAWKQQLKKR.

604–611 (GPNMAGKS) is a binding site for ATP.

Belongs to the DNA mismatch repair MutS family.

In terms of biological role, this protein is involved in the repair of mismatches in DNA. It is possible that it carries out the mismatch recognition step. This protein has a weak ATPase activity. In Brevibacillus brevis (strain 47 / JCM 6285 / NBRC 100599), this protein is DNA mismatch repair protein MutS.